The following is a 232-amino-acid chain: Polycomb group RING finger protein 5-B (232 aa).

The RING-type zinc-finger motif lies at 18 to 57 (CFVCKGYLIKPTTVTECLHTFCKSCIVQHFEDSNDCPKCG). Residues 93–104 (QEDEFWRRKESN) show a composition bias toward basic and acidic residues. Residues 93–128 (QEDEFWRRKESNDENGPMCKKRRVDEEDDDKGDGDY) are disordered.

As to quaternary structure, component of a PRC1-like complex.

Its subcellular location is the nucleus. Component of Polycomb group (PcG) multiprotein complexes; the complex class is required to maintain the transcriptionally repressive state of some genes. In Danio rerio (Zebrafish), this protein is Polycomb group RING finger protein 5-B (pcgf5b).